Reading from the N-terminus, the 360-residue chain is Magnesium transporter NIPA2 (360 aa).

The Extracellular segment spans residues 1–9; the sequence is MSQGHGKYD. The chain crosses the membrane as a helical span at residues 10–30; it reads FYIGLGLAMSSSIFIGGSFIL. At 31-56 the chain is on the cytoplasmic side; the sequence is KKKGLLRLARKGSTRAGQGGHAYLKE. Residues 57-77 form a helical membrane-spanning segment; sequence WLWWAGLLSMGAGEVANFAAY. A topological domain (extracellular) is located at residue Ala-78. The helical transmembrane segment at 79-99 threads the bilayer; the sequence is FAPATLVTPLGALSVLVSAIL. Topologically, residues 100–107 are cytoplasmic; sequence SSYFLNER. Residues 108–128 form a helical membrane-spanning segment; sequence LNLHGKIGCLLSILGSTVMVI. Residues 129 to 149 lie on the Extracellular side of the membrane; the sequence is HAPKEEEIETLNEMSHKLGDP. Residues 150–170 form a helical membrane-spanning segment; the sequence is GFVVFATLVVIVSLILIFVVG. The Cytoplasmic segment spans residues 171-175; the sequence is PRHGQ. The helical transmembrane segment at 176–196 threads the bilayer; the sequence is TNILVYITICSVIGAVSVSCA. Residues 197–215 lie on the Extracellular side of the membrane; the sequence is KGLGIAIKELFAGKPVLQH. Residues 216–236 form a helical membrane-spanning segment; that stretch reads PLTWILLLSLIVCVSTQINYL. Topologically, residues 237–246 are cytoplasmic; it reads NRALDIFNTS. The chain crosses the membrane as a helical span at residues 247–267; that stretch reads IVTPIYYVFFTTSVITCSAIL. The Extracellular portion of the chain corresponds to 268–278; it reads FKEWQDMPVDD. Residues 279 to 299 traverse the membrane as a helical segment; sequence VIGTLSGFFTIIVGIFLLHAF. Residues 300–360 are Cytoplasmic-facing; sequence KDVSFSLSSL…SRRNGNLTAF (61 aa).

Belongs to the NIPA family.

It is found in the cell membrane. The protein resides in the early endosome. The catalysed reaction is Mg(2+)(in) = Mg(2+)(out). Functionally, acts as a selective Mg(2+) transporter. This chain is Magnesium transporter NIPA2 (NIPA2), found in Bos taurus (Bovine).